We begin with the raw amino-acid sequence, 1473 residues long: NACHT, LRR and PYD domains-containing protein 1 (1473 aa).

A Pyrin domain is found at 1-92 (MAGGAWGRLA…CAQAQEGAGH (92 aa)). The tract at residues 90–113 (AGHSPSFPYSPSEPHLGSPSQPTS) is disordered. 3 positions are modified to phosphoserine; by MAPK11 and MAPK14: Ser93, Ser99, and Ser101. Position 107 is a phosphoserine; by MAPK14 (Ser107). The short motif at 111 to 117 (PTSTAVL) is the ZAKalpha motif 1 element. Thr112 is subject to Phosphothreonine; by MAPK11, MAPK14 and MAP3K20. Phosphoserine; by MAP3K20 is present on Ser113. Phosphothreonine; by MAP3K20 is present on residues Thr114 and Thr129. Ser132 is modified (phosphoserine; by MAP3K20). A disordered region spans residues 160-254 (LPSSPDHESP…HTSLQPHHHP (95 aa)). Ser163 is modified (phosphoserine; by MAPK14). Phosphoserine; by MAPK11 and MAPk14 is present on Ser168. Ser170 is modified (phosphoserine; by MAPK11 and MAPK14). Positions 170 to 182 (SQESPNAPTSTAV) are enriched in polar residues. A Phosphoserine; by MAPK11 modification is found at Ser173. The short motif at 177-183 (PTSTAVL) is the ZAKalpha motif 2 element. Residue Thr178 is modified to Phosphothreonine; by MAPK11. The residue at position 179 (Ser179) is a Phosphoserine; by MAPK11 and MAP3K20. Position 180 is a phosphothreonine; by MAPK11 and MAP3K20 (Thr180). Over residues 218–231 (EIREREREKSEKGR) the composition is skewed to basic and acidic residues. An NACHT domain is found at 328–637 (RIVILQGAAG…EFFAAMSYVL (310 aa)). Residue 334 to 341 (GAAGIGKS) coordinates ATP. LRR repeat units follow at residues 809–830 (NLKE…SLCK), 838–858 (LLET…KDLA), 866–887 (TLTE…HLCQ), 895–915 (KLQR…QDLA), 923–944 (SLKE…LLCE), and 950–973 (ACKL…ELRA). Residues 991–1017 (VMTPTEGLDTGEMSNSTSSLKRQRLGS) form a disordered region. The tract at residues 1079-1212 (FWGPTGPVAT…HHIVLENPSF (134 aa)) is ZU5. In terms of domain architecture, FIIND spans 1079-1364 (FWGPTGPVAT…LMPATTLIPP (286 aa)). Positions 1213 to 1364 (SPLGVLLKMI…LMPATTLIPP (152 aa)) are UPA. Residues 1374–1463 (DAPQLLHFVD…HLIMELWEKG (90 aa)) form the CARD domain.

This sequence belongs to the NLRP family. Interacts (via LRR repeats) with BCL2 and BCL2L1 (via the loop between motifs BH4 and BH3); these interactions reduce NLRP1 inflammasome-induced CASP1 activation and IL1B release, possibly by impairing NLRP1 interaction with PYCARD. Interacts with NOD2; this interaction is enhanced in the presence of muramyl dipeptide (MDP) and increases IL1B release. Interacts with EIF2AK2/PKR; this interaction requires EIF2AK2 activity, is accompanied by EIF2AK2 autophosphorylation and promotes inflammasome assembly in response to danger-associated signals. Interacts with MEFV; this interaction targets NLRP1 to degradation by autophagy, hence preventing excessive IL1B- and IL18-mediated inflammation. Binds (via LRR domain) to dsDNA and dsRNA. Interacts with DPP9; leading to inhibit activation of the inflammasome. DPP9 acts via formation of a ternary complex, composed of a DPP9 homodimer, one full-length NLRP1 protein, and one cleaved C-terminus of NLRP1 (NACHT, LRR and PYD domains-containing protein 1, C-terminus). Interacts with DPP8; leading to inhibit activation of the inflammasome, probably via formation of a ternary complex with DPP8. In terms of assembly, interacts with the C-terminal part of NLRP1 (NACHT, LRR and PYD domains-containing protein 1, C-terminus) in absence of pathogens and other damage-associated signals. As to quaternary structure, interacts with the N-terminal part of NLRP1 (NACHT, LRR and PYD domains-containing protein 1, N-terminus) in absence of pathogens and other damage-associated signals. Homomultimer; forms the NLRP1 inflammasome polymeric complex, a filament composed of homopolymers of this form in response to pathogens and other damage-associated signals. The NLRP1 inflammasome polymeric complex associates with PYCARD/ASC. Interacts (via CARD domain) with PYCARD/ASC (via CARD domain); leading to pro-caspase-1 (proCASP1) recruitment. Pro-caspase-1 (proCASP1) filament formation increases local enzyme concentration, resulting in trans-autocleavage and activation. Active CASP1 then processes IL1B and IL18 precursors, leading to the release of mature cytokines in the extracellular milieu and inflammatory response. (Microbial infection) Interacts with vaccinia virus protein F1. In terms of assembly, (Microbial infection) Interacts with human herpes virus 8/HHV-8 proteins ORF45; relieving autoinhibition of the NLRP1 inflammasome. In terms of processing, autocatalytically cleaved. Autocatalytic cleavage in FIIND region occurs constitutively, prior to activation signals, and is required for inflammasome activity (IL1B release), possibly by facilitating CASP1 binding. Both N- and C-terminal parts remain associated non-covalently. Ubiquitinated by the cullin:ZER1/ZYG11B complex in response to pathogen-associated signals, leading to its degradation by the proteasome and subsequent release of the cleaved C-terminal part of the protein (NACHT, LRR and PYD domains-containing protein 1, C-terminus), which polymerizes and forms the NLRP1 inflammasome. Post-translationally, phosphorylated by MAP3K20 isoform ZAKalpha, MAPK11 and MAPK14 in response to UV-B irradiation and ribosome collisions, promoting activation of the NLRP1 inflammasome and pyroptosis. In terms of processing, (Microbial infection) Cleaved between Gln-130 and Gly-131 by the Protease 3C from various human enteroviruses and rhinoviruses (EV68, EV71, Coxsackievirus B3, HRV-14 and HRV-16). This cleavage triggers N-glycine-mediated proteasomal degradation of the autoinhibitory NLRP1 N-terminal fragment via the cullin:ZER1/ZYG11B complex which liberates the activating C-terminal fragment and activates NLRP1 inflammasome. (Microbial infection) Cleaved between Gln-333 and Gly-334 by the 3C-like proteinase nsp5 from human coronavirus SARS-CoV-2. This cleavage liberates the activating C-terminal fragment and activates NLRP1 inflammasome, leading to downstream activation of GSDME and lung epithelial cell death. Widely expressed. Abundantly expressed in primary immune cells (isoform 1 and isoform 2), including in neutrophils, monocytes/macrophages, dendritic cells (mostly Langerhans cells), and B- and T-lymphocytes (at protein level). Strongly expressed in epithelial cells lining the glandular epithelium, such as that of the gastrointestinal tract (stomach, small intestine, colon), the respiratory tract (trachea and bronchi), and the endometrial and endocervical glands, gallbladder, prostate, and breast (at protein level). In testis, expressed in spermatogonia and primary spermatocytes, but not in Sertoli cells (at protein level). In the brain, expressed in neurons, in particular in pyramidal ones and in oligodendrocytes, but not detected in microglia (at protein level). Expressed in adult and fetal ocular tissues, including in adult and 24-week old fetal choroid, sclera, cornea, and optic nerve, as well as in adult retina and fetal retina/retinal pigment epithelium. Highly expressed in the skin throughout the epidermis and in dermal fibroblasts, in both glabrous skin and plantar skin. It is detected in keratinocytes, but not in melanocytes. Expressed in epidermal appendages such as hair follicles.

Its subcellular location is the cytoplasm. It localises to the cytosol. It is found in the nucleus. The protein resides in the inflammasome. The catalysed reaction is ATP + H2O = ADP + phosphate + H(+). With respect to regulation, NLRP1 inflammasome is activated by cleavage by the Protease 3C from various human enteroviruses and rhinoviruses (EV68, EV71, Coxsackievirus B3, HRV-14 and HRV-16): cleavage promotes ubiquitination and degradation of the N-terminal part, releasing the cleaved C-terminal part of the protein (NACHT, LRR and PYD domains-containing protein 1, C-terminus), which polymerizes and forms the NLRP1 inflammasome. Activated double-stranded RNA: positive-strand RNA viruses such as Semliki forest virus and long dsRNA activate the NLRP1 inflammasome. In contrast to its mouse ortholog, not activated by Bacillus anthracis lethal toxin. NLRP1 inflammasome is inhibited by DPP8 and DPP9, which sequester the C-terminal fragment of NLRP1 (NACHT, LRR and PYD domains-containing protein 1, C-terminus) in a ternary complex, thereby preventing NLRP1 oligomerization and activation. NLRP1 inflammasome is activated by Val-boroPro (Talabostat, PT-100), an inhibitor of dipeptidyl peptidases DPP8 and DPP9. Val-boroPro relieves inhibition of DPP8 and/or DPP9 by promoting disruption of the ternary complex, releasing its C-terminal part from autoinhibition. ATPase activity is activated by dsRNA-binding but not dsDNA-binding. (Microbial infection) The NLRP1 inflammasome is activated by human herpes virus 8/HHV-8 protein ORF45, which interacts with the N-terminal part of NLRP1 and promotes its translocation into the nucleus, relieving autoinhibition and leading to activation. Its activity is regulated as follows. (Microbial infection) NLRP1 inflammasome is activated by cleavage by the 3C-like proteinase nsp5 from human coronavirus SARS-CoV-2. Acts as the sensor component of the NLRP1 inflammasome, which mediates inflammasome activation in response to various pathogen-associated signals, leading to subsequent pyroptosis. Inflammasomes are supramolecular complexes that assemble in the cytosol in response to pathogens and other damage-associated signals and play critical roles in innate immunity and inflammation. Acts as a recognition receptor (PRR): recognizes specific pathogens and other damage-associated signals, such as cleavage by some human enteroviruses and rhinoviruses, double-stranded RNA, UV-B irradiation, or Val-boroPro inhibitor, and mediates the formation of the inflammasome polymeric complex composed of NLRP1, CASP1 and PYCARD/ASC. In response to pathogen-associated signals, the N-terminal part of NLRP1 is degraded by the proteasome, releasing the cleaved C-terminal part of the protein (NACHT, LRR and PYD domains-containing protein 1, C-terminus), which polymerizes and associates with PYCARD/ASC to initiate the formation of the inflammasome complex: the NLRP1 inflammasome recruits pro-caspase-1 (proCASP1) and promotes caspase-1 (CASP1) activation, which subsequently cleaves and activates inflammatory cytokines IL1B and IL18 and gasdermin-D (GSDMD), leading to pyroptosis. In the absence of GSDMD expression, the NLRP1 inflammasome is able to recruit and activate CASP8, leading to activation of gasdermin-E (GSDME). Activation of NLRP1 inflammasome is also required for HMGB1 secretion; the active cytokines and HMGB1 stimulate inflammatory responses. Binds ATP and shows ATPase activity. Plays an important role in antiviral immunity and inflammation in the human airway epithelium. Specifically recognizes a number of pathogen-associated signals: upon infection by human rhinoviruses 14 and 16 (HRV-14 and HRV-16), NLRP1 is cleaved and activated which triggers NLRP1-dependent inflammasome activation and IL18 secretion. Positive-strand RNA viruses, such as Semliki forest virus and long dsRNA activate the NLRP1 inflammasome, triggering IL1B release in a NLRP1-dependent fashion. Acts as a direct sensor for long dsRNA and thus RNA virus infection. May also be activated by muramyl dipeptide (MDP), a fragment of bacterial peptidoglycan, in a NOD2-dependent manner. The NLRP1 inflammasome is also activated in response to UV-B irradiation causing ribosome collisions: ribosome collisions cause phosphorylation and activation of NLRP1 in a MAP3K20-dependent manner, leading to pyroptosis. Its function is as follows. Constitutes the precursor of the NLRP1 inflammasome, which mediates autoproteolytic processing within the FIIND domain to generate the N-terminal and C-terminal parts, which are associated non-covalently in absence of pathogens and other damage-associated signals. In terms of biological role, regulatory part that prevents formation of the NLRP1 inflammasome: in absence of pathogens and other damage-associated signals, interacts with the C-terminal part of NLRP1 (NACHT, LRR and PYD domains-containing protein 1, C-terminus), preventing activation of the NLRP1 inflammasome. In response to pathogen-associated signals, this part is ubiquitinated and degraded by the proteasome, releasing the cleaved C-terminal part of the protein, which polymerizes and forms the NLRP1 inflammasome. Functionally, constitutes the active part of the NLRP1 inflammasome. In absence of pathogens and other damage-associated signals, interacts with the N-terminal part of NLRP1 (NACHT, LRR and PYD domains-containing protein 1, N-terminus), preventing activation of the NLRP1 inflammasome. In response to pathogen-associated signals, the N-terminal part of NLRP1 is degraded by the proteasome, releasing this form, which polymerizes and associates with PYCARD/ASC to form of the NLRP1 inflammasome complex: the NLRP1 inflammasome complex then directly recruits pro-caspase-1 (proCASP1) and promotes caspase-1 (CASP1) activation, leading to gasdermin-D (GSDMD) cleavage and subsequent pyroptosis. It is unclear whether is involved in inflammasome formation. It is not cleaved within the FIIND domain, does not assemble into specks, nor promote IL1B release. However, in an vitro cell-free system, it has been shown to be activated by MDP. The protein is NACHT, LRR and PYD domains-containing protein 1 of Homo sapiens (Human).